Here is a 96-residue protein sequence, read N- to C-terminus: Myticin-B (96 aa).

The signal sequence occupies residues methionine 1–alanine 20. Residues valine 61–leucine 96 constitute a propeptide, removed in mature form.

Post-translationally, contains four disulfide bonds. Hemocytes.

It localises to the secreted. Its function is as follows. Bacteriolytic activity against Gram-positive bacteria M.luteus, B.megaterium and A.viridans and Gram-negative bacteria E.coli D31. Possesses antifungal activity against F.oxysporum. This chain is Myticin-B, found in Mytilus galloprovincialis (Mediterranean mussel).